The primary structure comprises 107 residues: Small ribosomal subunit protein bS18 (107 aa).

Belongs to the bacterial ribosomal protein bS18 family. Part of the 30S ribosomal subunit. Forms a tight heterodimer with protein bS6.

Its function is as follows. Binds as a heterodimer with protein bS6 to the central domain of the 16S rRNA, where it helps stabilize the platform of the 30S subunit. The polypeptide is Small ribosomal subunit protein bS18 (Mycoplasmopsis agalactiae (strain NCTC 10123 / CIP 59.7 / PG2) (Mycoplasma agalactiae)).